The following is a 559-amino-acid chain: Acetolactate synthase, catabolic (559 aa).

FAD contacts are provided by residues Arg-159, 263–284, and 304–323; these read FNNQ…IGYS and DVLP…LVGD. Asp-447 provides a ligand contact to Mg(2+).

The protein belongs to the TPP enzyme family. As to quaternary structure, homodimer.

The catalysed reaction is 2 pyruvate + H(+) = (2S)-2-acetolactate + CO2. Its pathway is polyol metabolism; (R,R)-butane-2,3-diol biosynthesis; (R,R)-butane-2,3-diol from pyruvate: step 1/3. This chain is Acetolactate synthase, catabolic (budB), found in Raoultella terrigena (Klebsiella terrigena).